We begin with the raw amino-acid sequence, 314 residues long: Testis-specific Y-encoded protein 9 (314 aa).

The protein belongs to the nucleosome assembly protein (NAP) family.

It localises to the cytoplasm. It is found in the nucleus. In terms of biological role, may be involved in sperm differentiation and proliferation. This Homo sapiens (Human) protein is Testis-specific Y-encoded protein 9.